The primary structure comprises 847 residues: Pep5-like zinc finger protein C16A10.03c (847 aa).

The stretch at 387–526 (YIEAIPFSDS…GIWLFNSDPM (140 aa)) is one CHCR repeat. The segment at 780-814 (CDNCEGLLDVPFVSYSCLHLVHRDCATETVCPKCK) adopts an RING-type; atypical zinc-finger fold.

It is found in the cytoplasm. The protein localises to the nucleus. In Schizosaccharomyces pombe (strain 972 / ATCC 24843) (Fission yeast), this protein is Pep5-like zinc finger protein C16A10.03c.